Consider the following 193-residue polypeptide: Orotate phosphoribosyltransferase (193 aa).

Residues Arg102, Lys103, Lys106, His108, and 129–137 (EDVVTTGGS) each bind 5-phospho-alpha-D-ribose 1-diphosphate. Residues Thr133 and Arg161 each contribute to the orotate site.

It belongs to the purine/pyrimidine phosphoribosyltransferase family. PyrE subfamily. In terms of assembly, homodimer. The cofactor is Mg(2+).

It carries out the reaction orotidine 5'-phosphate + diphosphate = orotate + 5-phospho-alpha-D-ribose 1-diphosphate. It functions in the pathway pyrimidine metabolism; UMP biosynthesis via de novo pathway; UMP from orotate: step 1/2. Catalyzes the transfer of a ribosyl phosphate group from 5-phosphoribose 1-diphosphate to orotate, leading to the formation of orotidine monophosphate (OMP). This Prochlorococcus marinus (strain NATL1A) protein is Orotate phosphoribosyltransferase.